The primary structure comprises 171 residues: Large ribosomal subunit protein uL10 (171 aa).

It belongs to the universal ribosomal protein uL10 family. In terms of assembly, part of the ribosomal stalk of the 50S ribosomal subunit. The N-terminus interacts with L11 and the large rRNA to form the base of the stalk. The C-terminus forms an elongated spine to which L12 dimers bind in a sequential fashion forming a multimeric L10(L12)X complex.

Functionally, forms part of the ribosomal stalk, playing a central role in the interaction of the ribosome with GTP-bound translation factors. The sequence is that of Large ribosomal subunit protein uL10 from Maricaulis maris (strain MCS10) (Caulobacter maris).